Here is a 271-residue protein sequence, read N- to C-terminus: MSVDVKSEFSENDSSSSSSSPTNVNNVAWPNYQMMPFMNAQPLRDKMLQPSFDPQLYGRWPQMGEAGFYGHSDIYSTFALPQLSTNGQILPTAEVVEVKPPLSNGSSSSDSGMYPSPNDLTPFPSTSSGIGASSSSSDLQAAAAAAANYQMRAATCYQQSVWPFMDYQQPFPWKMPLGSAGKERRASSDTKSLPTGPGTNNVRVRTADKYRMVYSDYQRLELEKEFHTSAFITSDRKSQLSTMLSLTERQIKIWFQNRRAKDRRDKQKIRL.

3 disordered regions span residues 1-25 (MSVD…TNVN), 100-135 (PPLS…ASSS), and 178-202 (GSAG…TNNV). Composition is skewed to low complexity over residues 100 to 117 (PPLS…YPSP) and 125 to 135 (STSSGIGASSS). A compositionally biased stretch (polar residues) spans 189–202 (DTKSLPTGPGTNNV). The homeobox DNA-binding region spans 207–266 (ADKYRMVYSDYQRLELEKEFHTSAFITSDRKSQLSTMLSLTERQIKIWFQNRRAKDRRDK).

It belongs to the Caudal homeobox family. As to quaternary structure, interacts with tir-1 and let-756.

Its subcellular location is the nucleus. The protein resides in the chromosome. The protein localises to the centromere. It localises to the kinetochore. Transcriptional activator. Interacts with promoter regions for tbx-8.9, tbx-9, elt-1, hnd-1, scrt-1, and vab-7 genes. Binds the sequence ATTTATGAC. Binds to the enhancer region of the hlh-1 gene promoter during embryonic body wall muscle development. Activates the gene for mab-5 in embryo development. Necessary for vab-7 expression in C blastomeres in the posterior of embryos. Required for posterior V6 neuroectoblast cell fate specification during postembryonic neurogenesis (patterning) which generates the characteristic ray lineage during male tail development. Binds to ced-3 promoter and activated expression which is crucial for tail-spike cell death. Has a role in E cell specification in endoderm development and body wall muscle development. The protein is Homeobox protein pal-1 of Caenorhabditis briggsae.